The following is a 261-amino-acid chain: Cytochrome c oxidase subunit 3 (261 aa).

Topologically, residues 1-15 are mitochondrial matrix; sequence MAHQAHAYHMVDPSP. A helical membrane pass occupies residues 16 to 34; that stretch reads WPLTGAIAALLLTSGTAVW. Over 35–40 the chain is Mitochondrial intermembrane; the sequence is FHFHSL. The chain crosses the membrane as a helical span at residues 41–66; that stretch reads TLLTLGNILLLLTMYQWWRDIIREGT. The Mitochondrial matrix segment spans residues 67–72; that stretch reads FQGHHT. A helical membrane pass occupies residues 73–105; it reads PPVQKGLRYGMILFITSEVFFFLGFFWAFYHAS. The Mitochondrial intermembrane portion of the chain corresponds to 106–128; sequence LAPTPELGGCWPPTGITTLDPFE. A helical membrane pass occupies residues 129–152; the sequence is VPLLNTAVLLASGVTVTWAHHSIM. The Mitochondrial matrix portion of the chain corresponds to 153 to 155; sequence EGE. Residues 156-183 form a helical membrane-spanning segment; the sequence is RKQTIQALTLTILLGFYFTFLQGMEYYE. Residues 184–190 are Mitochondrial intermembrane-facing; the sequence is APFTIAD. Residues 191–223 form a helical membrane-spanning segment; it reads GVYGSTFFVATGFHGLHVIIGSTFLAVCLLRQV. The Mitochondrial matrix segment spans residues 224 to 232; it reads QYHFTSEHH. Residues 233–256 traverse the membrane as a helical segment; the sequence is FGFEAAAWYWHFVDVVWLFLYVSI. Topologically, residues 257 to 261 are mitochondrial intermembrane; sequence YWWGS.

This sequence belongs to the cytochrome c oxidase subunit 3 family. As to quaternary structure, component of the cytochrome c oxidase (complex IV, CIV), a multisubunit enzyme composed of 14 subunits. The complex is composed of a catalytic core of 3 subunits MT-CO1, MT-CO2 and MT-CO3, encoded in the mitochondrial DNA, and 11 supernumerary subunits COX4I, COX5A, COX5B, COX6A, COX6B, COX6C, COX7A, COX7B, COX7C, COX8 and NDUFA4, which are encoded in the nuclear genome. The complex exists as a monomer or a dimer and forms supercomplexes (SCs) in the inner mitochondrial membrane with NADH-ubiquinone oxidoreductase (complex I, CI) and ubiquinol-cytochrome c oxidoreductase (cytochrome b-c1 complex, complex III, CIII), resulting in different assemblies (supercomplex SCI(1)III(2)IV(1) and megacomplex MCI(2)III(2)IV(2)).

It localises to the mitochondrion inner membrane. The catalysed reaction is 4 Fe(II)-[cytochrome c] + O2 + 8 H(+)(in) = 4 Fe(III)-[cytochrome c] + 2 H2O + 4 H(+)(out). Component of the cytochrome c oxidase, the last enzyme in the mitochondrial electron transport chain which drives oxidative phosphorylation. The respiratory chain contains 3 multisubunit complexes succinate dehydrogenase (complex II, CII), ubiquinol-cytochrome c oxidoreductase (cytochrome b-c1 complex, complex III, CIII) and cytochrome c oxidase (complex IV, CIV), that cooperate to transfer electrons derived from NADH and succinate to molecular oxygen, creating an electrochemical gradient over the inner membrane that drives transmembrane transport and the ATP synthase. Cytochrome c oxidase is the component of the respiratory chain that catalyzes the reduction of oxygen to water. Electrons originating from reduced cytochrome c in the intermembrane space (IMS) are transferred via the dinuclear copper A center (CU(A)) of subunit 2 and heme A of subunit 1 to the active site in subunit 1, a binuclear center (BNC) formed by heme A3 and copper B (CU(B)). The BNC reduces molecular oxygen to 2 water molecules using 4 electrons from cytochrome c in the IMS and 4 protons from the mitochondrial matrix. The protein is Cytochrome c oxidase subunit 3 (mt-co3) of Oncorhynchus clarkii (Cutthroat trout).